Reading from the N-terminus, the 210-residue chain is Adenylate kinase (210 aa).

An ATP-binding site is contributed by 10–15 (GSGKGT). Residues 28 to 57 (SVGKVLRTVMESNTAEADVVKKFIKSGKLV) form an NMP region. AMP contacts are provided by residues R34, 55 to 57 (KLV), 83 to 86 (GYPR), and Q90. The tract at residues 120–158 (GRISCTDCGTIYNKLYCMPKINGVCDICNSSSFQNRVDD) is LID. An ATP-binding site is contributed by R121. Zn(2+)-binding residues include C124 and C127. Residue 130–131 (IY) coordinates ATP. Zn(2+) is bound by residues C144 and C147. AMP is bound by residues R155 and R166. Q194 contacts ATP.

This sequence belongs to the adenylate kinase family. As to quaternary structure, monomer.

It localises to the cytoplasm. The catalysed reaction is AMP + ATP = 2 ADP. It functions in the pathway purine metabolism; AMP biosynthesis via salvage pathway; AMP from ADP: step 1/1. Its function is as follows. Catalyzes the reversible transfer of the terminal phosphate group between ATP and AMP. Plays an important role in cellular energy homeostasis and in adenine nucleotide metabolism. This chain is Adenylate kinase, found in Orientia tsutsugamushi (strain Boryong) (Rickettsia tsutsugamushi).